An 83-amino-acid polypeptide reads, in one-letter code: Small ribosomal subunit protein bS18 (83 aa).

It belongs to the bacterial ribosomal protein bS18 family. In terms of assembly, part of the 30S ribosomal subunit. Forms a tight heterodimer with protein bS6.

Binds as a heterodimer with protein bS6 to the central domain of the 16S rRNA, where it helps stabilize the platform of the 30S subunit. The polypeptide is Small ribosomal subunit protein bS18 (Tropheryma whipplei (strain TW08/27) (Whipple's bacillus)).